A 319-amino-acid chain; its full sequence is MMMEHEMATNRRPRAKRTPGDKLGKGGGDAALAPAADAEIPASSAPEPAAPISAPPAPVIKPVGGDAWASLLSGSPWSSPGAASPTEAALKPVMPSALAEAVANAPPEAAPFTELVSHWSPPFRRQPDREYEEINPAEAAIPVTAAAPEPEPEPVPEPEPEPEPEAAHDHAATETEGVTEMMTSDVELEIEIASDVEVVEAPAVIEPSPRPQAFSHSTAYAYPAEPAPAVETAAEAAPAGPAENPVKEVPVEDLFTGIFNVADSAVRGAIGASTDLLRDPKSLGGKLSVAGQSLVHSIKGRFNALLAPRHGAKSNGDEF.

Disordered stretches follow at residues 1–59 (MMME…PAPV) and 145–176 (AAAP…TETE). The span at 30 to 52 (AALAPAADAEIPASSAPEPAAPI) shows a compositional bias: low complexity. Over residues 150–164 (PEPEPVPEPEPEPEP) the composition is skewed to acidic residues.

Belongs to the magnetosome MamJ protein family.

The protein localises to the magnetosome. Its function is as follows. Regulates the dynamic behavior of MamK filaments; paralog MamJ also promotes MamK turnover. At least one other protein besides MamJ and LimJ is required for MamK turnover. Might connect magnetosomes to MamK filaments. The polypeptide is MamJ paralog LimJ (Paramagnetospirillum magneticum (strain ATCC 700264 / AMB-1) (Magnetospirillum magneticum)).